Here is a 317-residue protein sequence, read N- to C-terminus: Mitochondrial thiamine pyrophosphate carrier 1 (317 aa).

A run of 6 helical transmembrane segments spans residues 21–41 (AVSG…ARSV), 86–106 (VPAS…YAWL), 122–142 (LAVG…LDLL), 176–196 (GGAW…GIYE), 207–227 (LPWL…AAVF), and 281–300 (GLTM…LWVY). 3 Solcar repeats span residues 22–109 (VSGL…LNTA), 116–201 (PPQA…CTIA), and 206–306 (GLPW…CLRL).

The protein belongs to the mitochondrial carrier (TC 2.A.29) family.

The protein resides in the mitochondrion inner membrane. In terms of biological role, mitochondrial transporter that mediates uptake of thiamine pyrophosphate (ThPP) into mitochondria. The protein is Mitochondrial thiamine pyrophosphate carrier 1 (TPC1) of Eremothecium gossypii (strain ATCC 10895 / CBS 109.51 / FGSC 9923 / NRRL Y-1056) (Yeast).